The chain runs to 324 residues: Arginase (324 aa).

His115, Asp142, His144, and Asp146 together coordinate Mn(2+). Substrate is bound by residues 144-148 (HTDLH), 155-157 (SGN), and Asp196. Asp244 and Asp246 together coordinate Mn(2+). Substrate is bound by residues Thr258 and Glu289.

This sequence belongs to the arginase family. Homohexamer. Mn(2+) is required as a cofactor.

The catalysed reaction is L-arginine + H2O = urea + L-ornithine. It functions in the pathway nitrogen metabolism; urea cycle; L-ornithine and urea from L-arginine: step 1/1. The protein is Arginase (arcA) of Agrobacterium fabrum (strain C58 / ATCC 33970) (Agrobacterium tumefaciens (strain C58)).